The chain runs to 116 residues: Carbohydrate-binding protein AQN-3 (116 aa).

Cys9 and Cys30 are joined by a disulfide. The 102-residue stretch at 9–110 (CGGFLKNYSG…SSFNVYFYGI (102 aa)) folds into the CUB domain. An N-linked (GlcNAc...) asparagine glycan is attached at Asn50. Residues Cys53 and Cys74 are joined by a disulfide bond. At His85 the chain carries Methylhistidine.

It belongs to the spermadhesin family. Post-translationally, the residue at position 85 was identified as a methylhistidine by mass spectrometry.

It is found in the secreted. Functionally, AQN proteins mediate the binding of boar spermatozoa to component(s) of the egg's zona pellucida by a carbohydrate-binding mechanism. AQN proteins are secretory components of the male accessory glands being coated to the sperm surface at the time of ejaculation. They possess as well heparin-, serine-protease-inhibitor-binding capability. In Sus scrofa (Pig), this protein is Carbohydrate-binding protein AQN-3.